The following is a 128-amino-acid chain: EPIDERMAL PATTERNING FACTOR-like protein 2 (128 aa).

The N-terminal stretch at 1-28 (MVWSSNMSSFLLILLILNSTHFSLMANG) is a signal peptide. Cystine bridges form between Cys-60-Cys-119, Cys-65-Cys-71, and Cys-68-Cys-121. Over residues 79–90 (NPQTKLHSPLTT) the composition is skewed to polar residues. The tract at residues 79-100 (NPQTKLHSPLTTSSSSSSETIH) is disordered.

The protein belongs to the plant cysteine rich small secretory peptide family. Epidermal patterning factor subfamily.

The protein resides in the secreted. In terms of biological role, controls stomatal patterning. The protein is EPIDERMAL PATTERNING FACTOR-like protein 2 of Arabidopsis thaliana (Mouse-ear cress).